Here is a 380-residue protein sequence, read N- to C-terminus: Transporter PPE51 (380 aa).

M1 carries the post-translational modification N-acetylmethionine.

Belongs to the mycobacterial PPE family. In terms of assembly, interacts with PE19 and PE25.

The protein localises to the cell outer membrane. Its function is as follows. Small molecule-selective channel required for the uptake of nutrients across the outer mycomembrane. Transports glycerol and glucose. Involved in sensitivity to M.tuberculosis growth inhibitory agrichemical 3,3-bis-di(methylsulfonyl)propionamide (3bMP1). Transports maltose and lactose disaccharides. Involved in sensitivity to bactericidal thio-disaccharide T-6 compound (1,6-anhydro-3-deoxy-4-S-(2,3,4,6-tetra-O-acetyl-beta-D-glucopyranosyl)-D-glycero-hexopyranos-2-ulose). Transports extracellular trehalose, a component of the cell envelope, and trehalose analog, 6-azido trehalose (6-TreAz), which has antimycobacterial activity. In terms of biological role, plays a role in response to starvation and stress, likely environment within the host. Inhibits canonical autophagy in infected mouse RAW264.7 macrophages. Inhibits autophagy and enhances intracellular bacterial survival when expressed in human macrophage-like THP-1 cells. Inhibits Toll-like receptor 2 (TLR2)-dependent signaling leading to autophagy inhibition, increased intracellular bacterial survival, reduced phagocytosis and reduced secretion of interleukin 6 (IL-6) and IL-1 in infected mouse primary bone marrow-derived macrophage (BMDM) cells. Required for virulence and persistence in the lungs and spleens of intranasally infected C57BL/6J mice. Blocks the antibacterial effects of TLR2 activation, suppresses MHC class II-dependent antigen presentation, and reduces IFN-gamma and TNF-alpha-producing CD4(+) T cells during infection in C57BL/6J mice. The polypeptide is Transporter PPE51 (PPE51) (Mycobacterium tuberculosis (strain CDC 1551 / Oshkosh)).